The sequence spans 598 residues: Urease subunit alpha (598 aa).

Residues H141, H143, and K223 each contribute to the Ni(2+) site. K223 bears the N6-carboxylysine mark. H225 contacts substrate. 2 residues coordinate Ni(2+): H252 and H278. The active-site Proton donor is the H326. A Ni(2+)-binding site is contributed by D366.

Belongs to the metallo-dependent hydrolases superfamily. Urease alpha subunit family. In terms of assembly, heterotrimer of UreA (gamma), UreB (beta) and UreC (alpha) subunits. Three heterotrimers associate to form the active enzyme. Ni cation is required as a cofactor. Post-translationally, carboxylation allows a single lysine to coordinate two nickel ions.

It is found in the cytoplasm. The catalysed reaction is urea + 2 H2O + H(+) = hydrogencarbonate + 2 NH4(+). It participates in nitrogen metabolism; urea degradation; CO(2) and NH(3) from urea (urease route): step 1/1. The sequence is that of Urease subunit alpha from Ureaplasma parvum serovar 3 (strain ATCC 27815 / 27 / NCTC 11736).